A 980-amino-acid chain; its full sequence is Glutamate receptor ionotropic, kainate 5 (980 aa).

Positions 1–14 (MPAELLLLLIVAFA) are cleaved as a signal peptide. The Extracellular segment spans residues 15–544 (SPSCQVLSSL…YFSFLDPFSP (530 aa)). 3 disulfides stabilise this stretch: Cys36–Cys292, Cys83–Cys334, and Cys165–Cys170. Residues Asn219, Asn271, Asn285, Asn322, Asn372, Asn394, Asn400, Asn407, Asn414, and Asn478 are each glycosylated (N-linked (GlcNAc...) asparagine). Residues 545–565 (AVWLFMLLAYLAVSCVLFLAA) traverse the membrane as a helical segment. The Cytoplasmic segment spans residues 566–622 (RLSPYEWYNPHPCLRARPHILENQYTLGNSLWFPVGGFMQQGSEIMPRALSTRCVSG). A helical transmembrane segment spans residues 623-643 (VWWAFTLIIISSYTANLAAFL). Topologically, residues 644–803 (TVQRMEVPVE…HRAKGLGMEN (160 aa)) are extracellular. The N-linked (GlcNAc...) asparagine glycan is linked to Asn735. The chain crosses the membrane as a helical span at residues 804 to 824 (IGGIFIVLICGLIIAVFVAVM). At 825–980 (EFIWSTRRSA…AGPRELAEHE (156 aa)) the chain is on the cytoplasmic side. 2 disordered regions span residues 891–927 (YSAG…PTPC) and 944–980 (ASGA…AEHE). Residues 894 to 903 (GAGGDAGSAH) show a composition bias toward gly residues.

Belongs to the glutamate-gated ion channel (TC 1.A.10.1) family. GRIK5 subfamily. Homotetramer. Heterotetramer with GRIK2. Can form functional heteromeric receptors with GRIK1 and GRIK2. Can form functional heteromeric receptors with GRIK3.

Its subcellular location is the cell membrane. It localises to the postsynaptic cell membrane. The protein localises to the presynaptic cell membrane. In terms of biological role, ionotropic glutamate receptor that functions as a cation-permeable ligand-gated ion channel, gated by L-glutamate and the glutamatergic agonist kainic acid. Cannot form functional channels on its own and produces channel activity only in heteromeric assembly with GRIK1 and GRIK2 subunits. Can form functional heteromeric receptors with GRIK3. The protein is Glutamate receptor ionotropic, kainate 5 (GRIK5) of Homo sapiens (Human).